We begin with the raw amino-acid sequence, 268 residues long: 14-3-3-like protein GF14 upsilon (268 aa).

Residues serine 69 and serine 192 each carry the phosphoserine modification. Position 213 is a phosphothreonine (threonine 213). Positions 243–268 (EAGDDIKEAPKEVQKVDEQAQPPPSQ) are disordered. Over residues 246 to 260 (DDIKEAPKEVQKVDE) the composition is skewed to basic and acidic residues. At serine 267 the chain carries Phosphoserine.

The protein belongs to the 14-3-3 family. In terms of assembly, interacts with EDE1. Interacts with DREB1A and DREB1B in the nucleus. Interacts with CINV1.

It localises to the cytoplasm. It is found in the nucleus. Functionally, is associated with a DNA binding complex that binds to the G box, a well-characterized cis-acting DNA regulatory element found in plant genes. May be involved in cell cycle regulation by binding to soluble EDE1 and sequestering it in an inactive form during the early stages of mitosis. In Arabidopsis thaliana (Mouse-ear cress), this protein is 14-3-3-like protein GF14 upsilon (GRF5).